The chain runs to 1576 residues: Disco-interacting protein 2 homolog B (1576 aa).

3 positions are modified to phosphoserine: Ser-9, Ser-50, and Ser-53. The DMAP1-binding domain occupies 12–131; that stretch reads AVAALPPEVR…PMPTKRRSTF (120 aa). The tract at residues 31–167 is disordered; sequence LSEGDITQKG…AALSAALQQS (137 aa). The span at 52–62 shows a compositional bias: polar residues; the sequence is YSPQTQETDSA. Low complexity predominate over residues 70–83; that stretch reads QTPAPSAAQTSAPS. The residue at position 71 (Thr-71) is a Phosphothreonine. Residues 92-104 show a composition bias toward basic and acidic residues; sequence GARDERYRSDIHT. At Ser-100 the chain carries Phosphoserine. Position 140 is a phosphothreonine (Thr-140). Residues Ser-146, Ser-148, and Ser-153 each carry the phosphoserine modification. Residues 155-167 are compositionally biased toward low complexity; it reads RRQAALSAALQQS. 3 positions are modified to phosphoserine: Ser-178, Ser-193, and Ser-203. The segment at 179-201 is disordered; that stretch reads IQGSSTSSSASSTLSHGEVKGTS. Over residues 182–193 the composition is skewed to low complexity; sequence SSTSSSASSTLS. The interval 217–246 is disordered; sequence SAPPDVTTTTSSSSSSSSIRPANIDLPPSG. Residues 223–234 show a composition bias toward low complexity; that stretch reads TTTTSSSSSSSS. At Ser-259 the chain carries Phosphoserine.

The protein belongs to the DIP2 family. Interacts with alpha-tubulin. Moderately expressed in adult brain, placenta, skeletal muscle, heart, kidney, pancreas, lung, spleen and colon. Expression was weaker in adult liver, kidney, spleen, and ovary, and in fetal brain and liver. In the brain, it is expressed in the cerebral cortex; the frontal, parietal, occipital and temporal lobes; the paracentral gyrus; the pons; the corpus callosum and the hippocampus. Highest expression levels in the brain were found in the cerebral cortex and the frontal and parietal lobes.

Its subcellular location is the cell projection. It is found in the dendrite. The protein localises to the axon. It localises to the perikaryon. In terms of biological role, negatively regulates axonal outgrowth and is essential for normal synaptic transmission. Not required for regulation of axon polarity. Promotes acetylation of alpha-tubulin. This is Disco-interacting protein 2 homolog B (DIP2B) from Homo sapiens (Human).